A 176-amino-acid chain; its full sequence is Acireductone dioxygenase (176 aa).

Positions 1–21 (MKAYWYDNKPGDQREPHDSGR) are disordered. Residues 9–20 (KPGDQREPHDSG) are compositionally biased toward basic and acidic residues. 4 residues coordinate Fe(2+): His81, His83, Glu87, and His126. Positions 81, 83, 87, and 126 each coordinate Ni(2+).

It belongs to the acireductone dioxygenase (ARD) family. Fe(2+) is required as a cofactor. It depends on Ni(2+) as a cofactor.

It localises to the cytoplasm. Its subcellular location is the nucleus. The enzyme catalyses 1,2-dihydroxy-5-(methylsulfanyl)pent-1-en-3-one + O2 = 4-methylsulfanyl-2-oxobutanoate + formate + 2 H(+). It catalyses the reaction 1,2-dihydroxy-5-(methylsulfanyl)pent-1-en-3-one + O2 = 3-(methylsulfanyl)propanoate + CO + formate + 2 H(+). The protein operates within amino-acid biosynthesis; L-methionine biosynthesis via salvage pathway; L-methionine from S-methyl-5-thio-alpha-D-ribose 1-phosphate: step 5/6. Its function is as follows. Catalyzes 2 different reactions between oxygen and the acireductone 1,2-dihydroxy-3-keto-5-methylthiopentene (DHK-MTPene) depending upon the metal bound in the active site. Fe-containing acireductone dioxygenase (Fe-ARD) produces formate and 2-keto-4-methylthiobutyrate (KMTB), the alpha-ketoacid precursor of methionine in the methionine recycle pathway. Ni-containing acireductone dioxygenase (Ni-ARD) produces methylthiopropionate, carbon monoxide and formate, and does not lie on the methionine recycle pathway. This Aspergillus fumigatus (strain ATCC MYA-4609 / CBS 101355 / FGSC A1100 / Af293) (Neosartorya fumigata) protein is Acireductone dioxygenase (adi1).